The sequence spans 125 residues: Oxytocin-neurophysin 1 (125 aa).

A signal peptide spans 1 to 19 (MACPSLACCLLGLLALTSA). An intrachain disulfide couples Cys-20 to Cys-25. Gly-28 carries the post-translational modification Glycine amide. Disulfide bonds link Cys-41–Cys-85, Cys-44–Cys-58, Cys-52–Cys-75, Cys-59–Cys-65, Cys-92–Cys-104, Cys-98–Cys-116, and Cys-105–Cys-110.

The protein belongs to the vasopressin/oxytocin family. As to quaternary structure, interacts with oxytocin receptor (Ki=1.5 nM). Interacts with vasopressin V1aR/AVPR1A (Ki=37 nM), V1bR/AVPR1B (Ki=222 nM), and V2R/AVPR2 receptors (Ki=823 nM).

Neurophysin 1 specifically binds oxytocin. Functionally, oxytocin causes contraction of the smooth muscle of the uterus and of the mammary gland. Acts by binding to oxytocin receptor (OXTR). The protein is Oxytocin-neurophysin 1 (Oxt) of Rattus norvegicus (Rat).